Here is a 144-residue protein sequence, read N- to C-terminus: Large ribosomal subunit protein uL15 (144 aa).

The segment at 1 to 54 (MRLNTLSPAEGSKKAGKRLGRGIGSGLGKTGGRGHKGQKSRSGGGVRRGFEGGQ) is disordered. The span at 21–31 (RGIGSGLGKTG) shows a compositional bias: gly residues.

Belongs to the universal ribosomal protein uL15 family. In terms of assembly, part of the 50S ribosomal subunit.

In terms of biological role, binds to the 23S rRNA. This is Large ribosomal subunit protein uL15 from Klebsiella pneumoniae (strain 342).